We begin with the raw amino-acid sequence, 194 residues long: MIPVDALLKAYREGFFPMADASDGQLYWCRPEMRALFPLESYRPSRDVLRLQRRGEYSVFFDSDFEAVIRACAAPRKDDPETWISGEIVETYIRIHELGLAHSVECRYRGELAGGLYGIAIGGAFFGESMFYRRSYASQVALWHLVCHLRLKGYLMLDAQIMNPHLRRLGAVEVPHDEYMRLLEAALRKKTAFL.

The protein belongs to the L/F-transferase family.

It is found in the cytoplasm. It carries out the reaction N-terminal L-lysyl-[protein] + L-leucyl-tRNA(Leu) = N-terminal L-leucyl-L-lysyl-[protein] + tRNA(Leu) + H(+). It catalyses the reaction N-terminal L-arginyl-[protein] + L-leucyl-tRNA(Leu) = N-terminal L-leucyl-L-arginyl-[protein] + tRNA(Leu) + H(+). The enzyme catalyses L-phenylalanyl-tRNA(Phe) + an N-terminal L-alpha-aminoacyl-[protein] = an N-terminal L-phenylalanyl-L-alpha-aminoacyl-[protein] + tRNA(Phe). Its function is as follows. Functions in the N-end rule pathway of protein degradation where it conjugates Leu, Phe and, less efficiently, Met from aminoacyl-tRNAs to the N-termini of proteins containing an N-terminal arginine or lysine. This chain is Leucyl/phenylalanyl-tRNA--protein transferase, found in Chlorobium luteolum (strain DSM 273 / BCRC 81028 / 2530) (Pelodictyon luteolum).